The sequence spans 216 residues: Elongation factor Ts (216 aa).

The interval 81–84 (TDFV) is involved in Mg(2+) ion dislocation from EF-Tu.

The protein belongs to the EF-Ts family.

The protein localises to the cytoplasm. Its function is as follows. Associates with the EF-Tu.GDP complex and induces the exchange of GDP to GTP. It remains bound to the aminoacyl-tRNA.EF-Tu.GTP complex up to the GTP hydrolysis stage on the ribosome. In Geobacter sp. (strain M21), this protein is Elongation factor Ts.